A 467-amino-acid polypeptide reads, in one-letter code: Probable protein phosphatase 2C 6 (467 aa).

The interval 61–81 (VEDDAVAPGRGEEGGEASAVG) is disordered. The PPM-type phosphatase domain maps to 149-457 (LWGHKSICGR…DNISVIVVDL (309 aa)). Mn(2+) is bound by residues aspartate 205, glycine 206, aspartate 386, and aspartate 448.

It belongs to the PP2C family. As to quaternary structure, interacts with PYL9. The cofactor is Mg(2+). Requires Mn(2+) as cofactor.

The protein resides in the nucleus. It localises to the cytoplasm. The protein localises to the cytosol. It catalyses the reaction O-phospho-L-seryl-[protein] + H2O = L-seryl-[protein] + phosphate. It carries out the reaction O-phospho-L-threonyl-[protein] + H2O = L-threonyl-[protein] + phosphate. In terms of biological role, probable protein phosphatase that may function in abscisic acid (ABA) signaling. In Oryza sativa subsp. japonica (Rice), this protein is Probable protein phosphatase 2C 6.